The chain runs to 97 residues: Co-chaperonin GroES (97 aa).

It belongs to the GroES chaperonin family. Heptamer of 7 subunits arranged in a ring. Interacts with the chaperonin GroEL.

Its subcellular location is the cytoplasm. Its function is as follows. Together with the chaperonin GroEL, plays an essential role in assisting protein folding. The GroEL-GroES system forms a nano-cage that allows encapsulation of the non-native substrate proteins and provides a physical environment optimized to promote and accelerate protein folding. GroES binds to the apical surface of the GroEL ring, thereby capping the opening of the GroEL channel. The protein is Co-chaperonin GroES of Pseudomonas fluorescens (strain ATCC BAA-477 / NRRL B-23932 / Pf-5).